Here is a 209-residue protein sequence, read N- to C-terminus: Large ribosomal subunit protein bL25 (209 aa).

Belongs to the bacterial ribosomal protein bL25 family. CTC subfamily. As to quaternary structure, part of the 50S ribosomal subunit; part of the 5S rRNA/L5/L18/L25 subcomplex. Contacts the 5S rRNA. Binds to the 5S rRNA independently of L5 and L18.

Its function is as follows. This is one of the proteins that binds to the 5S RNA in the ribosome where it forms part of the central protuberance. This chain is Large ribosomal subunit protein bL25, found in Chlorobium phaeobacteroides (strain BS1).